Reading from the N-terminus, the 217-residue chain is Thiamine-phosphate synthase (217 aa).

4-amino-2-methyl-5-(diphosphooxymethyl)pyrimidine contacts are provided by residues 44–48 (QYREK) and Asn-76. Positions 77 and 96 each coordinate Mg(2+). 4-amino-2-methyl-5-(diphosphooxymethyl)pyrimidine is bound at residue Ser-115. 141–143 (TKT) lines the 2-[(2R,5Z)-2-carboxy-4-methylthiazol-5(2H)-ylidene]ethyl phosphate pocket. 4-amino-2-methyl-5-(diphosphooxymethyl)pyrimidine is bound at residue Lys-144. 2-[(2R,5Z)-2-carboxy-4-methylthiazol-5(2H)-ylidene]ethyl phosphate is bound by residues Gly-172 and 192-193 (VS).

It belongs to the thiamine-phosphate synthase family. Mg(2+) serves as cofactor.

It carries out the reaction 2-[(2R,5Z)-2-carboxy-4-methylthiazol-5(2H)-ylidene]ethyl phosphate + 4-amino-2-methyl-5-(diphosphooxymethyl)pyrimidine + 2 H(+) = thiamine phosphate + CO2 + diphosphate. The catalysed reaction is 2-(2-carboxy-4-methylthiazol-5-yl)ethyl phosphate + 4-amino-2-methyl-5-(diphosphooxymethyl)pyrimidine + 2 H(+) = thiamine phosphate + CO2 + diphosphate. It catalyses the reaction 4-methyl-5-(2-phosphooxyethyl)-thiazole + 4-amino-2-methyl-5-(diphosphooxymethyl)pyrimidine + H(+) = thiamine phosphate + diphosphate. It participates in cofactor biosynthesis; thiamine diphosphate biosynthesis; thiamine phosphate from 4-amino-2-methyl-5-diphosphomethylpyrimidine and 4-methyl-5-(2-phosphoethyl)-thiazole: step 1/1. In terms of biological role, condenses 4-methyl-5-(beta-hydroxyethyl)thiazole monophosphate (THZ-P) and 2-methyl-4-amino-5-hydroxymethyl pyrimidine pyrophosphate (HMP-PP) to form thiamine monophosphate (TMP). The sequence is that of Thiamine-phosphate synthase from Lawsonia intracellularis (strain PHE/MN1-00).